Reading from the N-terminus, the 188-residue chain is Molybdopterin synthase catalytic subunit (188 aa).

The span at 1–14 shows a compositional bias: low complexity; the sequence is MATQPPQDQTSTTP. The segment at 1 to 23 is disordered; sequence MATQPPQDQTSTTPSLPPHLDPT. Residues 134-135, Lys-150, and 157-159 contribute to the substrate site; these read HR and KRE.

It belongs to the MoaE family. MOCS2B subfamily. Heterotetramer; composed of 2 small (MOCS2A) and 2 large (MOCS2B) subunits.

It is found in the cytoplasm. The catalysed reaction is 2 [molybdopterin-synthase sulfur-carrier protein]-C-terminal-Gly-aminoethanethioate + cyclic pyranopterin phosphate + H2O = molybdopterin + 2 [molybdopterin-synthase sulfur-carrier protein]-C-terminal Gly-Gly + 2 H(+). Its pathway is cofactor biosynthesis; molybdopterin biosynthesis. In terms of biological role, catalytic subunit of the molybdopterin synthase complex, a complex that catalyzes the conversion of precursor Z into molybdopterin. Acts by mediating the incorporation of 2 sulfur atoms from thiocarboxylated MOCS2A into precursor Z to generate a dithiolene group. The sequence is that of Molybdopterin synthase catalytic subunit from Aspergillus fumigatus (strain ATCC MYA-4609 / CBS 101355 / FGSC A1100 / Af293) (Neosartorya fumigata).